Here is a 466-residue protein sequence, read N- to C-terminus: Glutamate--tRNA ligase 2 (466 aa).

A 'HIGH' region motif is present at residues 11–21 (PSPTGFLHIGG). A 'KMSKS' region motif is present at residues 239–243 (KLSKR). ATP is bound at residue Lys-242.

Belongs to the class-I aminoacyl-tRNA synthetase family. Glutamate--tRNA ligase type 1 subfamily. In terms of assembly, monomer.

The protein resides in the cytoplasm. The enzyme catalyses tRNA(Glu) + L-glutamate + ATP = L-glutamyl-tRNA(Glu) + AMP + diphosphate. Functionally, catalyzes the attachment of glutamate to tRNA(Glu) in a two-step reaction: glutamate is first activated by ATP to form Glu-AMP and then transferred to the acceptor end of tRNA(Glu). This is Glutamate--tRNA ligase 2 from Roseobacter denitrificans (strain ATCC 33942 / OCh 114) (Erythrobacter sp. (strain OCh 114)).